Reading from the N-terminus, the 254-residue chain is MDNYADLSDTELTTLLRRYNIPHGPVVGSTRRLYEKKIFEYETQRRRLSPPSSSAASSYSFSDLNSTRGDADMYDLPKKEDALLYQSKGYNDDYYEESYFTTRTYGEPESAGPSRAVRQSVTSFPDADAFHHQVHDDDLLSSSEEECKDRERPMYGRDSAYQSITHYRPVSASRSSLDLSYYPTSSSTSFMSSSSSSSSWLTRRAIRPENRAPGAGLGQDRQVPLWGQLLLFLVFVIVLFFIYHFMQAEEGNPF.

An N-acetylmethionine modification is found at Met1. In terms of domain architecture, LEM spans 1-45 (MDNYADLSDTELTTLLRRYNIPHGPVVGSTRRLYEKKIFEYETQR). 2 positions are modified to phosphoserine: Ser8 and Ser29. Positions 46–222 (RRLSPPSSSA…PGAGLGQDRQ (177 aa)) are interaction with F-actin. Ser49 bears the Phosphoserine; by PKA mark. Ser54, Ser60, Ser87, Ser98, Ser141, Ser142, and Ser143 each carry phosphoserine. Phosphotyrosine is present on Tyr161. Residues 168–186 (RPVSASRSSLDLSYYPTSS) form an interaction with CTNNB1 region. Phosphoserine is present on residues Ser171, Ser173, and Ser175. The helical transmembrane segment at 223–243 (VPLWGQLLLFLVFVIVLFFIY) threads the bilayer.

Interacts with lamins A and C, BANF1, GMCL, BCLAF1 and YTHDC1/YT521. Interacts with TMEM43; the interaction retains emerin in the nuclear inner membrane. Interacts with SUN1 and SUN2. Interacts with ACTB, SPTAN1, F-actin, CTNNB1 and beta-tubulin. Interacts with TMEM201. Interacts with NEMP1. Post-translationally, found in four different phosphorylated forms, three of which appear to be associated with the cell cycle. In terms of tissue distribution, skeletal muscle, heart, colon, testis, ovary and pancreas.

Its subcellular location is the nucleus inner membrane. The protein resides in the nucleus outer membrane. Its function is as follows. Stabilizes and promotes the formation of a nuclear actin cortical network. Stimulates actin polymerization in vitro by binding and stabilizing the pointed end of growing filaments. Inhibits beta-catenin activity by preventing its accumulation in the nucleus. Acts by influencing the nuclear accumulation of beta-catenin through a CRM1-dependent export pathway. Links centrosomes to the nuclear envelope via a microtubule association. Required for proper localization of non-farnesylated prelamin-A/C. Together with NEMP1, contributes to nuclear envelope stiffness in germ cells. EMD and BAF are cooperative cofactors of HIV-1 infection. Association of EMD with the viral DNA requires the presence of BAF and viral integrase. The association of viral DNA with chromatin requires the presence of BAF and EMD. This is Emerin (EMD) from Homo sapiens (Human).